A 602-amino-acid chain; its full sequence is Bifunctional lycopene cyclase/phytoene synthase (602 aa).

Positions M1–R238 are lycopene beta-cyclase. 7 helical membrane passes run V7–F27, Y35–Y55, V69–V89, P110–A130, P142–G162, A173–I193, and L211–F231. The tract at residues I245–I602 is phytoene synthase.

The protein in the N-terminal section; belongs to the lycopene beta-cyclase family. In the C-terminal section; belongs to the phytoene/squalene synthase family.

The protein localises to the membrane. It catalyses the reaction all-trans-lycopene = gamma-carotene. The enzyme catalyses gamma-carotene = all-trans-beta-carotene. It carries out the reaction 2 (2E,6E,10E)-geranylgeranyl diphosphate = 15-cis-phytoene + 2 diphosphate. The protein operates within carotenoid biosynthesis; beta-carotene biosynthesis. Its pathway is carotenoid biosynthesis; phytoene biosynthesis; all-trans-phytoene from geranylgeranyl diphosphate: step 1/1. Bifunctional enzyme that catalyzes the reactions from geranylgeranyl diphosphate to phytoene (phytoene synthase) and lycopene to beta-carotene via the intermediate gamma-carotene (lycopene cyclase). The sequence is that of Bifunctional lycopene cyclase/phytoene synthase from Phycomyces blakesleeanus (strain ATCC 8743b / DSM 1359 / FGSC 10004 / NBRC 33097 / NRRL 1555).